A 189-amino-acid chain; its full sequence is Interferon alpha-A (189 aa).

Positions 1 to 23 (MAPAWSFLLSLLLLSCNAICSLG) are cleaved as a signal peptide. Intrachain disulfides connect Cys24–Cys122 and Cys52–Cys162.

This sequence belongs to the alpha/beta interferon family.

Its subcellular location is the secreted. Functionally, produced by macrophages, IFN-alpha have antiviral activities. Interferon stimulates the production of two enzymes: a protein kinase and an oligoadenylate synthetase. In Bos taurus (Bovine), this protein is Interferon alpha-A (IFNAA).